We begin with the raw amino-acid sequence, 745 residues long: ATP-dependent zinc metalloprotease FtsH (745 aa).

The Cytoplasmic segment spans residues 1-11 (MNNRRNGLFRN). Residues 12-32 (SLFYILMFLSLMGIIYFFFGG) form a helical membrane-spanning segment. Topologically, residues 33–131 (NSGSQTQNIR…VTAKAEESSG (99 aa)) are extracellular. The chain crosses the membrane as a helical span at residues 132 to 152 (IWVTLLMYIAPVILMLFLFYM). Residues 153–745 (MMGQAGQGGG…SSQDDTNSQA (593 aa)) lie on the Cytoplasmic side of the membrane. 227–234 (GPPGTGKT) lines the ATP pocket. His-449 is a Zn(2+) binding site. Residue Glu-450 is part of the active site. Residues His-453 and Asp-525 each coordinate Zn(2+). Positions 630–673 (MPEKDSNEFPSEKAATFEESKRELERREAEKHAQNQSADDKQAD) are enriched in basic and acidic residues. The segment at 630 to 745 (MPEKDSNEFP…SSQDDTNSQA (116 aa)) is disordered. Positions 690–704 (SESDASSEVSADSSV) are enriched in low complexity. Residues 705-745 (NSTANSATESATDSDVATSATGLPNAESATPSSQDDTNSQA) show a composition bias toward polar residues.

In the central section; belongs to the AAA ATPase family. It in the C-terminal section; belongs to the peptidase M41 family. As to quaternary structure, homohexamer. Zn(2+) serves as cofactor.

The protein resides in the cell membrane. In terms of biological role, acts as a processive, ATP-dependent zinc metallopeptidase for both cytoplasmic and membrane proteins. Plays a role in the quality control of integral membrane proteins. The polypeptide is ATP-dependent zinc metalloprotease FtsH (Lactiplantibacillus plantarum (strain ATCC BAA-793 / NCIMB 8826 / WCFS1) (Lactobacillus plantarum)).